We begin with the raw amino-acid sequence, 701 residues long: Polyribonucleotide nucleotidyltransferase (701 aa).

Mg(2+)-binding residues include aspartate 485 and aspartate 491. The region spanning 552–611 (PRITTLKINPEKIRDVIGKGGATIRALTEETGTTIELEDDGTVKIASSNGEATKEAIRRI) is the KH domain. In terms of domain architecture, S1 motif spans 621–689 (GTVYNGKVVR…RQGRVRLSMK (69 aa)).

It belongs to the polyribonucleotide nucleotidyltransferase family. In terms of assembly, component of the RNA degradosome, which is a multiprotein complex involved in RNA processing and mRNA degradation. It depends on Mg(2+) as a cofactor.

Its subcellular location is the cytoplasm. It carries out the reaction RNA(n+1) + phosphate = RNA(n) + a ribonucleoside 5'-diphosphate. In terms of biological role, involved in mRNA degradation. Catalyzes the phosphorolysis of single-stranded polyribonucleotides processively in the 3'- to 5'-direction. This Shewanella piezotolerans (strain WP3 / JCM 13877) protein is Polyribonucleotide nucleotidyltransferase.